A 191-amino-acid chain; its full sequence is MKRILFVILSTMLLASCVLPEATQQPAPVTPVEPKEKQETTPIEPSEKVLQPPKIQSINWNGIVQPLIEEMAKAHGVETGKVLLVDSVKNNTNGSLRTLKATEAIIDAISNKHIFQIVSRSQIHLARQALGLSTEDSLGLRSKSIGLARYLSADYVLYSVVSSNKGQRDLEMQLMLVKTGEILWSGHRDIN.

An N-terminal signal peptide occupies residues 1–16 (MKRILFVILSTMLLAS). A lipid anchor (N-palmitoyl cysteine) is attached at Cys-17. Cys-17 is lipidated: S-diacylglycerol cysteine. Residues 25 to 48 (QPAPVTPVEPKEKQETTPIEPSEK) are disordered.

It belongs to the LpoB family. As to quaternary structure, interacts with PBP1b.

It is found in the cell outer membrane. Regulator of peptidoglycan synthesis that is essential for the function of penicillin-binding protein 1B (PBP1b). This is Penicillin-binding protein activator LpoB from Xenorhabdus nematophila (strain ATCC 19061 / DSM 3370 / CCUG 14189 / LMG 1036 / NCIMB 9965 / AN6).